Here is a 357-residue protein sequence, read N- to C-terminus: Phospho-N-acetylmuramoyl-pentapeptide-transferase (357 aa).

Helical transmembrane passes span 23–43 (AIFS…YFIY), 70–90 (TMGG…YCNL), 91–111 (SNIY…IGFI), 127–147 (LKWK…MIKI), 171–191 (YLYV…VNLT), 196–216 (GLAI…SLFS), 236–256 (LAIL…FNSY), 260–280 (VFMG…IAIL), 286–306 (LLII…LQII), and 334–354 (LIIV…LISL).

This sequence belongs to the glycosyltransferase 4 family. MraY subfamily. The cofactor is Mg(2+).

Its subcellular location is the cell inner membrane. It carries out the reaction UDP-N-acetyl-alpha-D-muramoyl-L-alanyl-gamma-D-glutamyl-meso-2,6-diaminopimeloyl-D-alanyl-D-alanine + di-trans,octa-cis-undecaprenyl phosphate = di-trans,octa-cis-undecaprenyl diphospho-N-acetyl-alpha-D-muramoyl-L-alanyl-D-glutamyl-meso-2,6-diaminopimeloyl-D-alanyl-D-alanine + UMP. It functions in the pathway cell wall biogenesis; peptidoglycan biosynthesis. Its function is as follows. Catalyzes the initial step of the lipid cycle reactions in the biosynthesis of the cell wall peptidoglycan: transfers peptidoglycan precursor phospho-MurNAc-pentapeptide from UDP-MurNAc-pentapeptide onto the lipid carrier undecaprenyl phosphate, yielding undecaprenyl-pyrophosphoryl-MurNAc-pentapeptide, known as lipid I. This chain is Phospho-N-acetylmuramoyl-pentapeptide-transferase, found in Buchnera aphidicola subsp. Acyrthosiphon pisum (strain Tuc7).